A 342-amino-acid polypeptide reads, in one-letter code: UHRF1-like protein (342 aa).

Positions 41-149 are disordered; it reads SEATTLATPS…SHPGSEEEDI (109 aa). A compositionally biased stretch (polar residues) spans 42–59; that stretch reads EATTLATPSNLKTAGNQR. Residues 74–90 show a composition bias toward basic and acidic residues; that stretch reads NRSDSPRKRPTKDREDL. The span at 115–141 shows a compositional bias: polar residues; sequence TREQVTFNSDRDTPNTPSRQIKSTHSH. The 155-residue stretch at 168 to 322 folds into the YDG domain; that stretch reads GHIPGIGVGK…LMVCRYAFKR (155 aa). Asp218 provides a ligand contact to DNA. Positions 236–257 are disordered; the sequence is KGTKQNPKNLRTAPQTSHQSFD. The segment covering 238-257 has biased composition (polar residues); sequence TKQNPKNLRTAPQTSHQSFD.

It localises to the nucleus. Its function is as follows. Involved in the maintenance of DNA methylation. Binds hemimethylated DNA. The chain is UHRF1-like protein from Cryptococcus neoformans var. grubii serotype A (strain H99 / ATCC 208821 / CBS 10515 / FGSC 9487) (Filobasidiella neoformans var. grubii).